A 532-amino-acid polypeptide reads, in one-letter code: L-proline--[L-prolyl-carrier protein] ligase (532 aa).

The tract at residues K510–R532 is disordered.

It belongs to the ATP-dependent AMP-binding enzyme family.

The catalysed reaction is holo-[peptidyl-carrier protein] + L-proline + ATP = L-prolyl-[peptidyl-carrier protein] + AMP + diphosphate. Functionally, involved in the biosynthesis of undecylprodigiosin. Catalyzes the conversion of L-proline to L-prolyl-AMP and the transfer of the L-prolyl group to acyl carrier protein RedO. The sequence is that of L-proline--[L-prolyl-carrier protein] ligase from Streptomyces coelicolor (strain ATCC BAA-471 / A3(2) / M145).